Reading from the N-terminus, the 220-residue chain is 14-3-3-like protein (220 aa).

This sequence belongs to the 14-3-3 family.

The polypeptide is 14-3-3-like protein (Spinacia oleracea (Spinach)).